Reading from the N-terminus, the 388-residue chain is Ras-related protein Rab-26 (388 aa).

The tract at residues 1–115 is disordered; it reads MASTAVGLGG…HHHSQLSLTG (115 aa). Gly residues predominate over residues 7–21; the sequence is GLGGGEGDPGAGGPP. Residues 47-56 show a composition bias toward basic and acidic residues; it reads RIEELRRRPF. Positions 67–86 are enriched in low complexity; the sequence is PASVSASITTTTTQQQQQHH. The segment covering 87–109 has biased composition (basic residues); it reads NPSHHHQSSHHQPSHHHHHHHHS. 197 to 204 provides a ligand contact to GTP; the sequence is GDSGVGKT. The Effector region motif lies at 219-228; sequence SFSATVGIAL. GTP contacts are provided by residues 246–250 and 304–307; these read DTAGQ and NKAD. Cys382 carries S-palmitoyl cysteine lipidation. Cys385 is modified (cysteine methyl ester). The S-geranylgeranyl cysteine moiety is linked to residue Cys385. Residues 386–388 constitute a propeptide, removed in mature form; the sequence is RNM.

It belongs to the small GTPase superfamily. Rab family.

The protein localises to the cell membrane. Participates in exocrine secretion. The protein is Ras-related protein Rab-26 of Drosophila melanogaster (Fruit fly).